A 474-amino-acid chain; its full sequence is Bifunctional protein HldE (474 aa).

A ribokinase region spans residues 1-318; sequence MKLSMPRFDQ…RAIQREEGSE (318 aa). 194–197 contacts ATP; the sequence is NLSE. Asp-263 is an active-site residue. The cytidylyltransferase stretch occupies residues 343–474; the sequence is FTNGCFDILH…AIVEKIRGQG (132 aa).

In the N-terminal section; belongs to the carbohydrate kinase PfkB family. It in the C-terminal section; belongs to the cytidylyltransferase family. Homodimer.

It catalyses the reaction D-glycero-beta-D-manno-heptose 7-phosphate + ATP = D-glycero-beta-D-manno-heptose 1,7-bisphosphate + ADP + H(+). The catalysed reaction is D-glycero-beta-D-manno-heptose 1-phosphate + ATP + H(+) = ADP-D-glycero-beta-D-manno-heptose + diphosphate. Its pathway is nucleotide-sugar biosynthesis; ADP-L-glycero-beta-D-manno-heptose biosynthesis; ADP-L-glycero-beta-D-manno-heptose from D-glycero-beta-D-manno-heptose 7-phosphate: step 1/4. It participates in nucleotide-sugar biosynthesis; ADP-L-glycero-beta-D-manno-heptose biosynthesis; ADP-L-glycero-beta-D-manno-heptose from D-glycero-beta-D-manno-heptose 7-phosphate: step 3/4. Its function is as follows. Catalyzes the phosphorylation of D-glycero-D-manno-heptose 7-phosphate at the C-1 position to selectively form D-glycero-beta-D-manno-heptose-1,7-bisphosphate. In terms of biological role, catalyzes the ADP transfer from ATP to D-glycero-beta-D-manno-heptose 1-phosphate, yielding ADP-D-glycero-beta-D-manno-heptose. This Pseudomonas syringae pv. syringae (strain B728a) protein is Bifunctional protein HldE.